The primary structure comprises 109 residues: Large ribosomal subunit protein uL23 (109 aa).

Belongs to the universal ribosomal protein uL23 family. In terms of assembly, part of the 50S ribosomal subunit. Contacts protein L29, and trigger factor when it is bound to the ribosome.

Its function is as follows. One of the early assembly proteins it binds 23S rRNA. One of the proteins that surrounds the polypeptide exit tunnel on the outside of the ribosome. Forms the main docking site for trigger factor binding to the ribosome. The chain is Large ribosomal subunit protein uL23 from Chlorobium phaeobacteroides (strain BS1).